The sequence spans 367 residues: UDP-N-acetylglucosamine--N-acetylmuramyl-(pentapeptide) pyrophosphoryl-undecaprenol N-acetylglucosamine transferase (367 aa).

UDP-N-acetyl-alpha-D-glucosamine contacts are provided by residues 15–17 (TGG), Asn-127, Arg-163, Ser-191, Ile-249, and Gln-294.

Belongs to the glycosyltransferase 28 family. MurG subfamily.

The protein localises to the cell inner membrane. It carries out the reaction di-trans,octa-cis-undecaprenyl diphospho-N-acetyl-alpha-D-muramoyl-L-alanyl-D-glutamyl-meso-2,6-diaminopimeloyl-D-alanyl-D-alanine + UDP-N-acetyl-alpha-D-glucosamine = di-trans,octa-cis-undecaprenyl diphospho-[N-acetyl-alpha-D-glucosaminyl-(1-&gt;4)]-N-acetyl-alpha-D-muramoyl-L-alanyl-D-glutamyl-meso-2,6-diaminopimeloyl-D-alanyl-D-alanine + UDP + H(+). It participates in cell wall biogenesis; peptidoglycan biosynthesis. Cell wall formation. Catalyzes the transfer of a GlcNAc subunit on undecaprenyl-pyrophosphoryl-MurNAc-pentapeptide (lipid intermediate I) to form undecaprenyl-pyrophosphoryl-MurNAc-(pentapeptide)GlcNAc (lipid intermediate II). This chain is UDP-N-acetylglucosamine--N-acetylmuramyl-(pentapeptide) pyrophosphoryl-undecaprenol N-acetylglucosamine transferase, found in Burkholderia pseudomallei (strain 1710b).